A 106-amino-acid chain; its full sequence is NADH-quinone oxidoreductase subunit K (106 aa).

3 helical membrane passes run 8 to 28, 35 to 55, and 66 to 86; these read IGIE…IFGV, IIMF…FVAF, and VFVF…LAIL.

Belongs to the complex I subunit 4L family. In terms of assembly, NDH-1 is composed of 14 different subunits. Subunits NuoA, H, J, K, L, M, N constitute the membrane sector of the complex.

The protein resides in the cell inner membrane. The catalysed reaction is a quinone + NADH + 5 H(+)(in) = a quinol + NAD(+) + 4 H(+)(out). Functionally, NDH-1 shuttles electrons from NADH, via FMN and iron-sulfur (Fe-S) centers, to quinones in the respiratory chain. The immediate electron acceptor for the enzyme in this species is believed to be a menaquinone. Couples the redox reaction to proton translocation (for every two electrons transferred, four hydrogen ions are translocated across the cytoplasmic membrane), and thus conserves the redox energy in a proton gradient. In Flavobacterium psychrophilum (strain ATCC 49511 / DSM 21280 / CIP 103535 / JIP02/86), this protein is NADH-quinone oxidoreductase subunit K.